A 229-amino-acid chain; its full sequence is MKNINEWHHIFKLDPAKEISDEHLDQICESGTDAIIVGGTDNVTLDGVLDLLSRIRRSHMVPVVLEVSEEETLTPGFDYYFVPMVLNSKEKKYMMDIQHKAIKEFIDMMEFAEVYFEGYCILNEDAKAFQYTNCVMPDLDDVKAYAYMAEKVFHLPFFYIEYSGAYGDPTLVKEVKEELQNTQLLYGGGIETTAQAKEMKEYADTIIVGNSIYTNINEALKTVEAVKGN.

Residue K12 coordinates sn-glycerol 1-phosphate. Mg(2+) contacts are provided by D14 and T40. Sn-glycerol 1-phosphate contacts are provided by residues 159–164 (YIEYSG), G189, and 209–210 (GN).

It belongs to the GGGP/HepGP synthase family. Group I subfamily. In terms of assembly, homodimer. Mg(2+) is required as a cofactor.

It carries out the reaction sn-glycerol 1-phosphate + all-trans-heptaprenyl diphosphate = 3-heptaprenyl-sn-glycero-1-phosphate + diphosphate. The protein operates within membrane lipid metabolism; glycerophospholipid metabolism. Its function is as follows. Prenyltransferase that catalyzes in vivo the transfer of the heptaprenyl moiety of heptaprenyl pyrophosphate (HepPP; 35 carbon atoms) to the C3 hydroxyl of sn-glycerol-1-phosphate (G1P), producing heptaprenylglyceryl phosphate (HepGP). This reaction is an ether-bond-formation step in the biosynthesis of archaea-type G1P-based membrane lipids found in Bacillales. The chain is Heptaprenylglyceryl phosphate synthase from Oceanobacillus iheyensis (strain DSM 14371 / CIP 107618 / JCM 11309 / KCTC 3954 / HTE831).